Consider the following 298-residue polypeptide: ADP/ATP translocase 1 (298 aa).

Residues 1 to 7 lie on the Mitochondrial intermembrane side of the membrane; it reads MGDQALS. Gly2 is modified (N-acetylglycine). The Solcar 1 repeat unit spans residues 6 to 98; the sequence is LSFLKDFLAG…FAFKDKYKQI (93 aa). A Phosphoserine modification is found at Ser7. The helical transmembrane segment at 8 to 37 threads the bilayer; that stretch reads FLKDFLAGGIAAAVSKTAVAPIERVKLLLQ. The Mitochondrial matrix segment spans residues 38-74; it reads VQHASKQISAEKQYKGIIDCVVRIPKEQGFLSFWRGN. Lys52 carries the N6,N6,N6-trimethyllysine modification. A helical membrane pass occupies residues 75–99; it reads LANVIRYFPTQALNFAFKDKYKQIF. ADP is bound by residues Arg80 and Lys92. The Mitochondrial intermembrane segment spans residues 100-109; that stretch reads LGGVDRHKQF. Residues 110-130 form a helical membrane-spanning segment; that stretch reads WRYFAGNLASGGAAGATSLCF. Solcar repeat units lie at residues 111 to 201 and 212 to 297; these read RYFA…AKGM and VSWM…IKKY. Residues 131-178 lie on the Mitochondrial matrix side of the membrane; sequence VYPLDFARTRLAADVGKGSSQREFNGLGDCLTKIFKSDGLKGLYQGFS. Residue Lys147 is modified to N6-succinyllysine. Phosphoserine occurs at positions 149 and 150. The residue at position 160 (Cys160) is an S-nitrosocysteine. A helical membrane pass occupies residues 179-199; that stretch reads VSVQGIIIYRAAYFGVYDTAK. Over 200–210 the chain is Mitochondrial intermembrane; the sequence is GMLPDPKNVHI. The chain crosses the membrane as a helical span at residues 211-231; the sequence is IVSWMIAQSVTAVAGLVSYPF. Residues 232 to 273 are Mitochondrial matrix-facing; sequence DTVRRRMMMQSGRKGADIMYTGTVDCWRKIAKDEGRKAFFKG. Arg235 is a binding site for ADP. Residues 235–240 are important for transport activity; that stretch reads RRRMMM. A Nucleotide carrier signature motif motif is present at residues 235 to 240; that stretch reads RRRMMM. N6-succinyllysine occurs at positions 245 and 272. Residues 274–291 form a helical membrane-spanning segment; sequence AWSNVLRGMGGAFVLVLY. Residues 292-298 are Mitochondrial intermembrane-facing; sequence DEIKKYV.

This sequence belongs to the mitochondrial carrier (TC 2.A.29) family. Monomer. Found in a complex with ARL2, ARL2BP and SLC25A4/ANT1. Interacts with ARL2BP. Interacts with TIMM44; leading to inhibit the presequence translocase TIMM23, thereby promoting stabilization of PINK1. Post-translationally, under cell death induction, transglutaminated by TGM2. Transglutamination leads to formation of covalent cross-links between a glutamine and the epsilon-amino group of a lysine residue, forming polymers.

It is found in the mitochondrion inner membrane. The protein resides in the membrane. It carries out the reaction ADP(in) + ATP(out) = ADP(out) + ATP(in). The enzyme catalyses H(+)(in) = H(+)(out). With respect to regulation, the matrix-open state (m-state) is inhibited by the membrane-permeable bongkrekic acid (BKA). The cytoplasmic-open state (c-state) is inhibited by the membrane-impermeable toxic inhibitor carboxyatractyloside (CATR). Proton transporter activity is inhibited by ADP:ATP antiporter activity. ADP:ATP antiporter that mediates import of ADP into the mitochondrial matrix for ATP synthesis, and export of ATP out to fuel the cell. Cycles between the cytoplasmic-open state (c-state) and the matrix-open state (m-state): operates by the alternating access mechanism with a single substrate-binding site intermittently exposed to either the cytosolic (c-state) or matrix (m-state) side of the inner mitochondrial membrane. In addition to its ADP:ATP antiporter activity, also involved in mitochondrial uncoupling and mitochondrial permeability transition pore (mPTP) activity. Plays a role in mitochondrial uncoupling by acting as a proton transporter: proton transport uncouples the proton flows via the electron transport chain and ATP synthase to reduce the efficiency of ATP production and cause mitochondrial thermogenesis. Proton transporter activity is inhibited by ADP:ATP antiporter activity, suggesting that SLC25A4/ANT1 acts as a master regulator of mitochondrial energy output by maintaining a delicate balance between ATP production (ADP:ATP antiporter activity) and thermogenesis (proton transporter activity). Proton transporter activity requires free fatty acids as cofactor, but does not transport it. Also plays a key role in mPTP opening, a non-specific pore that enables free passage of the mitochondrial membranes to solutes of up to 1.5 kDa, and which contributes to cell death. It is however unclear if SLC25A4/ANT1 constitutes a pore-forming component of mPTP or regulates it. Acts as a regulator of mitophagy independently of ADP:ATP antiporter activity: promotes mitophagy via interaction with TIMM44, leading to inhibit the presequence translocase TIMM23, thereby promoting stabilization of PINK1. This Rattus norvegicus (Rat) protein is ADP/ATP translocase 1.